Reading from the N-terminus, the 133-residue chain is Small ribosomal subunit protein uS8 (133 aa).

Belongs to the universal ribosomal protein uS8 family. Part of the 30S ribosomal subunit. Contacts proteins S5 and S12.

Its function is as follows. One of the primary rRNA binding proteins, it binds directly to 16S rRNA central domain where it helps coordinate assembly of the platform of the 30S subunit. This Synechococcus elongatus (strain ATCC 33912 / PCC 7942 / FACHB-805) (Anacystis nidulans R2) protein is Small ribosomal subunit protein uS8.